Consider the following 152-residue polypeptide: S-protein homolog 4 (152 aa).

The signal sequence occupies residues M1 to S23. N-linked (GlcNAc...) asparagine glycosylation occurs at N71.

The protein belongs to the plant self-incompatibility (S1) protein family.

The protein resides in the secreted. The protein is S-protein homolog 4 of Arabidopsis thaliana (Mouse-ear cress).